Consider the following 248-residue polypeptide: Ureidoacrylate amidohydrolase RutB (248 aa).

Asp-41 functions as the Proton acceptor in the catalytic mechanism. Lys-150 is an active-site residue. The Nucleophile role is filled by Cys-183.

The protein belongs to the isochorismatase family. RutB subfamily.

It carries out the reaction (Z)-3-ureidoacrylate + H2O + H(+) = (Z)-3-aminoacrylate + NH4(+) + CO2. The catalysed reaction is (Z)-3-ureidoacrylate + H2O = (Z)-3-aminoacrylate + carbamate + H(+). It catalyses the reaction (Z)-2-methylureidoacrylate + H2O + H(+) = (Z)-2-methylaminoacrylate + NH4(+) + CO2. Its function is as follows. Hydrolyzes ureidoacrylate to form aminoacrylate and carbamate. The carbamate hydrolyzes spontaneously, thereby releasing one of the nitrogen atoms of the pyrimidine ring as ammonia and one of its carbon atoms as CO2. In Methylorubrum extorquens (strain ATCC 14718 / DSM 1338 / JCM 2805 / NCIMB 9133 / AM1) (Methylobacterium extorquens), this protein is Ureidoacrylate amidohydrolase RutB.